Reading from the N-terminus, the 95-residue chain is uncharacterized protein (95 aa).

The signal sequence occupies residues 1 to 21; it reads MKVLSISLIFFALLLTGCSQV.

This is an uncharacterized protein from Archaeoglobus fulgidus (strain ATCC 49558 / DSM 4304 / JCM 9628 / NBRC 100126 / VC-16).